A 405-amino-acid polypeptide reads, in one-letter code: Phosphoglycerate kinase (405 aa).

Substrate is bound by residues 24–26 (DFN), Arg40, 63–66 (HLGR), Arg122, and Arg162. ATP is bound by residues Lys212, Glu331, and 361–364 (GGDS).

It belongs to the phosphoglycerate kinase family. As to quaternary structure, monomer.

The protein resides in the cytoplasm. The catalysed reaction is (2R)-3-phosphoglycerate + ATP = (2R)-3-phospho-glyceroyl phosphate + ADP. The protein operates within carbohydrate degradation; glycolysis; pyruvate from D-glyceraldehyde 3-phosphate: step 2/5. The protein is Phosphoglycerate kinase of Corynebacterium efficiens (strain DSM 44549 / YS-314 / AJ 12310 / JCM 11189 / NBRC 100395).